The chain runs to 242 residues: Large ribosomal subunit protein uL1 (242 aa).

The protein belongs to the universal ribosomal protein uL1 family. In terms of assembly, part of the 50S ribosomal subunit.

Binds directly to 23S rRNA. The L1 stalk is quite mobile in the ribosome, and is involved in E site tRNA release. Its function is as follows. Protein L1 is also a translational repressor protein, it controls the translation of the L11 operon by binding to its mRNA. This is Large ribosomal subunit protein uL1 from Dictyoglomus turgidum (strain DSM 6724 / Z-1310).